Reading from the N-terminus, the 468-residue chain is Glutamine synthetase (468 aa).

The 86-residue stretch at 11–96 folds into the GS beta-grasp domain; that stretch reads HDVKWIDLRF…LVCDIIEPST (86 aa). The region spanning 104–468 is the GS catalytic domain; the sequence is PRAIAHRAEE…PLEYELYYSC (365 aa). Mg(2+) contacts are provided by glutamate 129 and glutamate 131. An ATP-binding site is contributed by glutamate 207. Positions 212 and 220 each coordinate Mg(2+). L-glutamate is bound by residues 264–265 and glycine 265; that span reads NG. Residue histidine 269 coordinates Mg(2+). ATP-binding positions include 271–273 and serine 273; that span reads HMS. 3 residues coordinate L-glutamate: arginine 321, glutamate 327, and arginine 339. 3 residues coordinate ATP: arginine 339, arginine 344, and arginine 352. Glutamate 357 is a Mg(2+) binding site. Residue arginine 359 participates in L-glutamate binding. Tyrosine 397 carries the post-translational modification O-AMP-tyrosine.

This sequence belongs to the glutamine synthetase family. As to quaternary structure, oligomer of 12 subunits arranged in the form of two hexagons. It depends on Mg(2+) as a cofactor. The cofactor is Mn(2+).

It catalyses the reaction L-glutamate + NH4(+) + ATP = L-glutamine + ADP + phosphate + H(+). When cellular nitrogen levels are high, the C-terminal adenylyl transferase (AT) of GlnE inhibits GlnA by covalent transfer of an adenylyl group from ATP to Tyr-397. Conversely, when nitrogen levels are low, the N-terminal adenylyl removase (AR) of GlnE activates GlnA by removing the adenylyl group by phosphorolysis. The fully adenylated enzyme complex is inactive. Catalyzes the formation of glutamine from glutamate and ammonia. In vitro, can also use hydroxylamine, methylamine and ethylamine, with 32%, 7% and 1% activity compared to ammonia, respectively. The chain is Glutamine synthetase from Pseudomonas taetrolens.